A 1154-amino-acid polypeptide reads, in one-letter code: Voltage-gated inwardly rectifying potassium channel KCNH2 (1154 aa).

Residues 1–403 (MPVRRGHVAP…RIHRWTILHY (403 aa)) are Cytoplasmic-facing. One can recognise a PAS domain in the interval 41-70 (VIYCNDGFCELCGYSRAEVMQRPCTCDFLH). The 53-residue stretch at 92–144 (RKVEIAFYRKDGSCFLCLVDVVPVKNEDGAVIMFILNFEVVMEKDMVGSPARD) folds into the PAC domain. The segment at 233–312 (ALVGSGSPPA…ASTGAMHPLR (80 aa)) is disordered. Serine 239 carries the post-translational modification Phosphoserine. Residues 258 to 269 (PDGSGSSCSLAR) show a composition bias toward polar residues. Serine 283, serine 284, serine 320, and serine 351 each carry phosphoserine. Residues 404 to 424 (SPFKAVWDWLILLLVIYTAVF) form a helical membrane-spanning segment. Over 425–450 (TPYSAAFLLKETEEGSQAPDCGYACQ) the chain is Extracellular. Residues 451-471 (PLAVVDLIVDIMFIVDILINF) form a helical membrane-spanning segment. At 472-495 (RTTYVNANEEVVSHPGRIAVHYFK) the chain is on the cytoplasmic side. The chain crosses the membrane as a helical span at residues 496–516 (GWFLIDMVAAIPFDLLIFGSG). Topologically, residues 517–520 (SEEL) are extracellular. Residues 521-541 (IGLLKTARLLRLVRVARKLDR) form a helical; Voltage-sensor membrane-spanning segment. Topologically, residues 542–547 (YSEYGA) are cytoplasmic. The chain crosses the membrane as a helical span at residues 548–568 (AVLFLLMCTFALIAHWLACIW). Over 569 to 611 (YAIGNMEQPNMDSHIGWLHNLGDQIGKPYNSSGLGGPSIKDKY) the chain is Extracellular. An intramembrane region (pore-forming) is located at residues 612 to 632 (VTALYFTFSSLTSVGFGNVSP). A Selectivity filter motif is present at residues 624–629 (SVGFGN). Residues 633-638 (NTNSEK) are Extracellular-facing. Residues 639 to 659 (IFSICVMLIGSLMYASIFGNV) traverse the membrane as a helical segment. Residues 660–1154 (SAIIQRLYSG…LHRHGSDPGS (495 aa)) are Cytoplasmic-facing. Positions 742-842 (PFRGATKGCL…IHRDDLLEVL (101 aa)) are cNMP-binding domain. The tract at residues 870 to 985 (GSPGSTELEG…DVEKSSDTCN (116 aa)) is disordered. A phosphoserine mark is found at serine 871 and serine 874. Basic residues predominate over residues 883–892 (RQRKRKLSFR). Gly residues predominate over residues 916–927 (GPSGRGQQGGPW). Positions 928–939 (GESLSSGPSSPE) are enriched in low complexity. Arginine 1014 is modified (omega-N-methylarginine). Positions 1037–1064 (RGDVESRLDALQRQLNRLETRLSADMAT) form a coiled coil. The interval 1125 to 1154 (DGPARRLSLPGQLGALTSQPLHRHGSDPGS) is disordered. Serine 1132 bears the Phosphoserine mark.

The protein belongs to the potassium channel family. H (Eag) (TC 1.A.1.20) subfamily. Kv11.1/KCNH2 sub-subfamily. The potassium channel is probably composed of a homo- or heterotetrameric complex of pore-forming alpha subunits that can associate with modulating beta subunits. Interacts with DNAJB12 and DNAJB14; chaperones DNAJB12 and DNAJB14 promote tetramerization. Heteromultimer with KCNH6/ERG2 and KCNH7/ERG3. Interacts with ALG10B. Forms a stable complex with KCNE1 or KCNE2, and that this heteromultimerization regulates Inward rectifier potassium channel activity. Interacts with CANX. The core-glycosylated, but not the fully glycosylated form interacts with RNF207. Interacts with NDFIP1 and NDFIP2; this interaction decreases the cell membrane expression by targeting KCNH2, through interaction with NEDD4L, for the degradation through the multivesicular bodies (MVBs)-lysosomal pathway. Post-translationally, phosphorylated on serine and threonine residues. Phosphorylation by PKA inhibits ion conduction.

Its subcellular location is the cell membrane. The enzyme catalyses K(+)(in) = K(+)(out). Functionally, pore-forming (alpha) subunit of voltage-gated inwardly rectifying potassium channel. Characterized by unusual gating kinetics by producing relatively small outward currents during membrane depolarization and large inward currents during subsequent repolarization which reflect a rapid inactivation during depolarization and quick recovery from inactivation but slow deactivation (closing) during repolarization. Channel properties are modulated by cAMP and subunit assembly. Forms a stable complex with KCNE1 or KCNE2, and that this heteromultimerization regulates inward rectifier potassium channel activity. The sequence is that of Voltage-gated inwardly rectifying potassium channel KCNH2 from Sus scrofa (Pig).